Consider the following 290-residue polypeptide: Agmatinase (290 aa).

Residues H112, D135, H137, D139, D216, and D218 each coordinate Mn(2+).

Belongs to the arginase family. Agmatinase subfamily. The cofactor is Mn(2+).

The catalysed reaction is agmatine + H2O = urea + putrescine. It functions in the pathway amine and polyamine biosynthesis; putrescine biosynthesis via agmatine pathway; putrescine from agmatine: step 1/1. Catalyzes the formation of putrescine from agmatine. The sequence is that of Agmatinase (speB) from Bacillus cereus (strain ATCC 14579 / DSM 31 / CCUG 7414 / JCM 2152 / NBRC 15305 / NCIMB 9373 / NCTC 2599 / NRRL B-3711).